A 65-amino-acid chain; its full sequence is Large ribosomal subunit protein bL35 (65 aa).

Belongs to the bacterial ribosomal protein bL35 family.

This is Large ribosomal subunit protein bL35 from Ruminiclostridium cellulolyticum (strain ATCC 35319 / DSM 5812 / JCM 6584 / H10) (Clostridium cellulolyticum).